The chain runs to 74 residues: SLQGGAPNFPQPSQQNGGWQVSPDLGRDDKGNTRGQIEIQNKGKDHDFNAGWGKVIRGPNKAKPTWHVGGTYRR.

Residues 1–74 (SLQGGAPNFP…TWHVGGTYRR (74 aa)) are disordered.

The protein belongs to the coleoptericin family.

Its subcellular location is the secreted. Responsible for the anti Gram-negative activity of immune hemolymph of Z.atratus. The polypeptide is Coleoptericin (Zophobas atratus (Giant mealworm beetle)).